Reading from the N-terminus, the 158-residue chain is Pathogenesis-related protein 1 (158 aa).

Belongs to the BetVI family.

It is found in the cytoplasm. The polypeptide is Pathogenesis-related protein 1 (PR1) (Asparagus officinalis (Garden asparagus)).